The following is a 465-amino-acid chain: Phospholipase A1-II 5 (465 aa).

The active-site Acyl-ester intermediate is Ser233. Active-site charge relay system residues include Ser233, Asp297, and His336.

This sequence belongs to the AB hydrolase superfamily. Lipase family.

It localises to the cytoplasm. Acylhydrolase that catalyzes the hydrolysis of phospholipids at the sn-1 position. This chain is Phospholipase A1-II 5, found in Oryza sativa subsp. japonica (Rice).